Consider the following 362-residue polypeptide: 3-dehydroquinate synthase (362 aa).

Residues 71-76, 105-109, 129-130, Lys-142, Lys-151, and 169-172 each bind NAD(+); these read DGEQYK, GVVGD, TT, and CLKT. 3 residues coordinate Zn(2+): Glu-184, His-247, and His-264.

Belongs to the sugar phosphate cyclases superfamily. Dehydroquinate synthase family. It depends on NAD(+) as a cofactor. Co(2+) is required as a cofactor. The cofactor is Zn(2+).

Its subcellular location is the cytoplasm. The enzyme catalyses 7-phospho-2-dehydro-3-deoxy-D-arabino-heptonate = 3-dehydroquinate + phosphate. The protein operates within metabolic intermediate biosynthesis; chorismate biosynthesis; chorismate from D-erythrose 4-phosphate and phosphoenolpyruvate: step 2/7. Functionally, catalyzes the conversion of 3-deoxy-D-arabino-heptulosonate 7-phosphate (DAHP) to dehydroquinate (DHQ). This is 3-dehydroquinate synthase from Escherichia coli O157:H7.